The primary structure comprises 313 residues: Deoxyribonucleoside regulator (313 aa).

The H-T-H motif DNA-binding region spans 23–42 (QQQIAEQLNISRPTVSRLLQ).

The protein belongs to the SorC transcriptional regulatory family. As to quaternary structure, homooctamer.

Negative regulator of the dra-nupC-pdp operon. DeoR binds cooperatively to the operator DNA, which consists of a palindrome and a direct repeat sequence located 3' to the palindrome. This chain is Deoxyribonucleoside regulator, found in Bacillus subtilis (strain 168).